The primary structure comprises 284 residues: Shikimate dehydrogenase (NADP(+)) (284 aa).

Shikimate is bound by residues 20 to 22 (SIS) and serine 67. The active-site Proton acceptor is the lysine 71. Aspartate 83 provides a ligand contact to NADP(+). Residues asparagine 92 and aspartate 107 each coordinate shikimate. Residues 129–133 (GAGGA) and isoleucine 227 contribute to the NADP(+) site. Tyrosine 229 contributes to the shikimate binding site. Glycine 250 serves as a coordination point for NADP(+).

This sequence belongs to the shikimate dehydrogenase family. Homodimer.

The enzyme catalyses shikimate + NADP(+) = 3-dehydroshikimate + NADPH + H(+). It functions in the pathway metabolic intermediate biosynthesis; chorismate biosynthesis; chorismate from D-erythrose 4-phosphate and phosphoenolpyruvate: step 4/7. Functionally, involved in the biosynthesis of the chorismate, which leads to the biosynthesis of aromatic amino acids. Catalyzes the reversible NADPH linked reduction of 3-dehydroshikimate (DHSA) to yield shikimate (SA). The chain is Shikimate dehydrogenase (NADP(+)) from Streptococcus pneumoniae (strain CGSP14).